Reading from the N-terminus, the 216-residue chain is UPF0502 protein Ent638_1581 (216 aa).

Belongs to the UPF0502 family.

The sequence is that of UPF0502 protein Ent638_1581 from Enterobacter sp. (strain 638).